Consider the following 377-residue polypeptide: MSKRDYYEVLGVGRDASEREIKKAYKRLAMKFHPDRNPGDKAAEASFKEVKEAYEILTDANKKAAYDQFGHAGVDPNRGGGGGYGGAGDFGDIFGDVFGDIFGGGRRGGQRQAARGSDLRYNLELSLEEAVKGLTKELRIPTLASCDVCDGSGAKKGTSATTCGTCHGQGQVQMRQGFFTVQQACPTCHGRGKIIKDPCTKCHGDGRVEKTKTLSVKIPAGVDTGDRIRLAGEGEAGEFGAPPGDLYVQVTVREHAIFVRDGNNLYCEVPISFSKAALGGEIEVPTLDGKVSLKIPAETQTGRMFRLRGKGVKSVRSHAVGDLLCKVVMETPVNLNERQKELLREFEATLTGESKKHSPKAEGFFDGVKKFFQDLNS.

Positions 5–70 constitute a J domain; that stretch reads DYYEVLGVGR…NKKAAYDQFG (66 aa). The segment at 133 to 211 adopts a CR-type zinc-finger fold; that stretch reads GLTKELRIPT…CHGDGRVEKT (79 aa). Cys146, Cys149, Cys163, Cys166, Cys185, Cys188, Cys199, and Cys202 together coordinate Zn(2+). 4 CXXCXGXG motif repeats span residues 146-153, 163-170, 185-192, and 199-206; these read CDVCDGSG, CGTCHGQG, CPTCHGRG, and CTKCHGDG.

This sequence belongs to the DnaJ family. Homodimer. Zn(2+) is required as a cofactor.

The protein localises to the cytoplasm. Its function is as follows. Participates actively in the response to hyperosmotic and heat shock by preventing the aggregation of stress-denatured proteins and by disaggregating proteins, also in an autonomous, DnaK-independent fashion. Unfolded proteins bind initially to DnaJ; upon interaction with the DnaJ-bound protein, DnaK hydrolyzes its bound ATP, resulting in the formation of a stable complex. GrpE releases ADP from DnaK; ATP binding to DnaK triggers the release of the substrate protein, thus completing the reaction cycle. Several rounds of ATP-dependent interactions between DnaJ, DnaK and GrpE are required for fully efficient folding. Also involved, together with DnaK and GrpE, in the DNA replication of plasmids through activation of initiation proteins. The sequence is that of Chaperone protein DnaJ from Shewanella sp. (strain MR-4).